A 373-amino-acid chain; its full sequence is Cobalt-precorrin-5B C(1)-methyltransferase (373 aa).

It belongs to the CbiD family.

It carries out the reaction Co-precorrin-5B + S-adenosyl-L-methionine = Co-precorrin-6A + S-adenosyl-L-homocysteine. The protein operates within cofactor biosynthesis; adenosylcobalamin biosynthesis; cob(II)yrinate a,c-diamide from sirohydrochlorin (anaerobic route): step 6/10. Its function is as follows. Catalyzes the methylation of C-1 in cobalt-precorrin-5B to form cobalt-precorrin-6A. This is Cobalt-precorrin-5B C(1)-methyltransferase from Listeria monocytogenes serovar 1/2a (strain ATCC BAA-679 / EGD-e).